Reading from the N-terminus, the 303-residue chain is Probable cell division protein WhiA (303 aa).

A DNA-binding region (H-T-H motif) is located at residues 272-303; it reads SIQQVADALEFPITKSGVNHRLRKINKIADDL.

It belongs to the WhiA family.

Involved in cell division and chromosome segregation. The protein is Probable cell division protein WhiA of Streptococcus pyogenes serotype M12 (strain MGAS2096).